A 431-amino-acid polypeptide reads, in one-letter code: Serine--tRNA ligase (431 aa).

Threonine 237–glutamate 239 contacts L-serine. ATP is bound at residue arginine 268–glutamate 270. Glutamate 291 is an L-serine binding site. Position 355–358 (glutamate 355–serine 358) interacts with ATP. Serine 390 contributes to the L-serine binding site.

The protein belongs to the class-II aminoacyl-tRNA synthetase family. Type-1 seryl-tRNA synthetase subfamily. Homodimer. The tRNA molecule binds across the dimer.

The protein localises to the cytoplasm. The catalysed reaction is tRNA(Ser) + L-serine + ATP = L-seryl-tRNA(Ser) + AMP + diphosphate + H(+). It catalyses the reaction tRNA(Sec) + L-serine + ATP = L-seryl-tRNA(Sec) + AMP + diphosphate + H(+). Its pathway is aminoacyl-tRNA biosynthesis; selenocysteinyl-tRNA(Sec) biosynthesis; L-seryl-tRNA(Sec) from L-serine and tRNA(Sec): step 1/1. Functionally, catalyzes the attachment of serine to tRNA(Ser). Is also able to aminoacylate tRNA(Sec) with serine, to form the misacylated tRNA L-seryl-tRNA(Sec), which will be further converted into selenocysteinyl-tRNA(Sec). The sequence is that of Serine--tRNA ligase from Neisseria gonorrhoeae (strain NCCP11945).